We begin with the raw amino-acid sequence, 414 residues long: Gamma-glutamyl phosphate reductase (414 aa).

Belongs to the gamma-glutamyl phosphate reductase family.

It is found in the cytoplasm. The enzyme catalyses L-glutamate 5-semialdehyde + phosphate + NADP(+) = L-glutamyl 5-phosphate + NADPH + H(+). The protein operates within amino-acid biosynthesis; L-proline biosynthesis; L-glutamate 5-semialdehyde from L-glutamate: step 2/2. Its function is as follows. Catalyzes the NADPH-dependent reduction of L-glutamate 5-phosphate into L-glutamate 5-semialdehyde and phosphate. The product spontaneously undergoes cyclization to form 1-pyrroline-5-carboxylate. The protein is Gamma-glutamyl phosphate reductase of Geobacillus thermodenitrificans (strain NG80-2).